Consider the following 1329-residue polypeptide: Synergin gamma (1329 aa).

The stretch at 112–152 (MQKQFAEEQQKRFEQQQKLLEEERKRRQFEEQKQKLRLLSS) forms a coiled coil. A disordered region spans residues 175–211 (GFSRDAKMHPTPASHPKKPDCPTSSHSTKTVSPSSAF). Residues 197 to 209 (TSSHSTKTVSPSS) show a composition bias toward low complexity. The 112-residue stretch at 393-504 (NESLVPDAYK…TPVSQPTAMT (112 aa)) folds into the EH domain. The DFXDF motif 1 motif lies at 555–559 (DFQDF). Residue Ser-571 is modified to Phosphoserine. Positions 578-594 (VPASSKTSNSQHGNSAP) are enriched in polar residues. The segment at 578 to 600 (VPASSKTSNSQHGNSAPSLLIPL) is disordered. Position 609 is an N6-acetyllysine (Lys-609). The tract at residues 614-878 (KGISAEKPSE…ADFHSSKFSS (265 aa)) is interaction with AP1G1. Disordered stretches follow at residues 661-701 (GTDD…TQTQ) and 730-753 (AFSTSKSVSSRPQPAGSAAAPASL). Phosphoserine is present on Ser-676. An interaction with AP1G1, AP1G2 and GGA1 region spans residues 761–773 (LADDFGEFNLFGE). Residues 785-789 (DFADF) carry the DFXDF motif 2 motif. Residues 797 to 835 (IPSEPKADDKYEALREEGSPGALSTSTVEGAHNPPVSSS) form a disordered region. Over residues 801 to 814 (PKADDKYEALREEG) the composition is skewed to basic and acidic residues. Position 815 is a phosphoserine (Ser-815). Residue Lys-836 is modified to N6-acetyllysine. 2 positions are modified to phosphoserine: Ser-844 and Ser-864. Disordered stretches follow at residues 856 to 922 (KENT…DSED), 941 to 1042 (HVMS…FGEF), and 1088 to 1113 (SLSLGDKEISRSSPSPALEQPFRDRS). The span at 864–873 (SDGDFADFHS) shows a compositional bias: basic and acidic residues. The short motif at 867 to 871 (DFADF) is the DFXDF motif 3 element. The segment covering 874 to 883 (SKFSSTSSDK) has biased composition (low complexity). 9 positions are modified to phosphoserine: Ser-904, Ser-944, Ser-947, Ser-997, Ser-1021, Ser-1088, Ser-1090, Ser-1102, and Ser-1113. Over residues 944 to 955 (SDSSLDLPTVSG) the composition is skewed to polar residues. A compositionally biased stretch (polar residues) spans 1016–1028 (ENTCPSPASSVAS). Phosphothreonine is present on Thr-1115.

As to quaternary structure, self-associates. Interacts with GGA1 (via GAE domain). Interacts with GGA2 and GGA3. Interacts with AP1G1 (via GAE domain), a subunit of adapter protein complex AP-1. Interacts with AP1G2 (via GAE domain) a subunit of adapter protein complex AP-1. Component of the aftiphilin/p200/gamma-synergin complex, at least composed of AFTPH/aftiphilin, HEATR5B/p200a and SYNRG/gamma-synergin, which plays a role in the AP1G1/AP-1-mediated trafficking of transferrin from early to recycling endosomes. Within the complex interacts with AFTPH/aftiphilin and HEATR5B/p200a; the interactions are direct. Interacts (via EH domain) with SCAMP1. As to expression, detected in brain and liver (at protein level). Ubiquitously expressed.

The protein resides in the cytoplasm. Its subcellular location is the golgi apparatus. It is found in the trans-Golgi network membrane. The protein localises to the perinuclear region. It localises to the cytoplasmic vesicle. The protein resides in the clathrin-coated vesicle. In terms of biological role, plays a role in endocytosis and/or membrane trafficking at the trans-Golgi network (TGN). May act by linking the adapter protein complex AP-1 to other proteins. Component of clathrin-coated vesicles. Component of the aftiphilin/p200/gamma-synergin complex, which plays roles in AP1G1/AP-1-mediated protein trafficking including the trafficking of transferrin from early to recycling endosomes, and the membrane trafficking of furin and the lysosomal enzyme cathepsin D between the trans-Golgi network (TGN) and endosomes. The protein is Synergin gamma (Synrg) of Rattus norvegicus (Rat).